The following is a 154-amino-acid chain: PTS system glucose-specific EIIA component (154 aa).

A PTS EIIA type-1 domain is found at 26–130 (DEVFKERMLG…SIKSPIIFTN (105 aa)). His-63 and His-78 together coordinate Zn(2+). His-78 (tele-phosphohistidine intermediate; for EIIA activity) is an active-site residue. His-78 is subject to Phosphohistidine; by HPr.

Heterodimer with glycerol kinase (glpk). Requires Zn(2+) as cofactor.

The protein localises to the cytoplasm. In terms of biological role, the phosphoenolpyruvate-dependent sugar phosphotransferase system (sugar PTS), a major carbohydrate active transport system, catalyzes the phosphorylation of incoming sugar substrates concomitantly with their translocation across the cell membrane. The enzyme II complex composed of PtsG and Crr is involved in glucose transport. The polypeptide is PTS system glucose-specific EIIA component (crr) (Mycoplasma capricolum subsp. capricolum (strain California kid / ATCC 27343 / NCTC 10154)).